Consider the following 467-residue polypeptide: F-box protein pof9 (467 aa).

In terms of domain architecture, F-box spans 3–49; the sequence is KSPFLELSYDILLEISTYLDYKDIVHLSETCKSLSYVFDDKTIWHRF. RCC1 repeat units lie at residues 77–131, 302–354, and 355–417; these read RGYA…LLNE, ETFT…YLTS, and DHSI…AAGG.

Interacts with skp1.

It is found in the cytoplasm. The protein localises to the nucleus. The sequence is that of F-box protein pof9 (pof9) from Schizosaccharomyces pombe (strain 972 / ATCC 24843) (Fission yeast).